Reading from the N-terminus, the 35-residue chain is uncharacterized protein (35 aa).

This is an uncharacterized protein from Haloarcula hispanica (His1V).